We begin with the raw amino-acid sequence, 187 residues long: tRNA (cytidine(56)-2'-O)-methyltransferase (187 aa).

S-adenosyl-L-methionine-binding positions include leucine 94 and 120–124 (GAEKV).

Belongs to the aTrm56 family. Homodimer.

It localises to the cytoplasm. It catalyses the reaction cytidine(56) in tRNA + S-adenosyl-L-methionine = 2'-O-methylcytidine(56) in tRNA + S-adenosyl-L-homocysteine + H(+). Specifically catalyzes the AdoMet-dependent 2'-O-ribose methylation of cytidine at position 56 in tRNAs. This Hyperthermus butylicus (strain DSM 5456 / JCM 9403 / PLM1-5) protein is tRNA (cytidine(56)-2'-O)-methyltransferase.